The primary structure comprises 308 residues: GTPase Era (308 aa).

Residues 14–181 enclose the Era-type G domain; that stretch reads RCGFVALIGA…RRALAAAMPE (168 aa). The segment at 22 to 29 is G1; sequence GAPNVGKS. Residue 22-29 coordinates GTP; the sequence is GAPNVGKS. The tract at residues 48–52 is G2; sequence QTTRA. The tract at residues 69–72 is G3; that stretch reads DTPG. Residues 69 to 73 and 131 to 134 each bind GTP; these read DTPGI and NKID. The interval 131–134 is G4; it reads NKID. Residues 160-162 form a G5 region; the sequence is VAA. One can recognise a KH type-2 domain in the interval 212-289; sequence LHQELPYQST…HLFLFVKVRD (78 aa).

The protein belongs to the TRAFAC class TrmE-Era-EngA-EngB-Septin-like GTPase superfamily. Era GTPase family. As to quaternary structure, monomer.

Its subcellular location is the cytoplasm. The protein resides in the cell inner membrane. Functionally, an essential GTPase that binds both GDP and GTP, with rapid nucleotide exchange. Plays a role in 16S rRNA processing and 30S ribosomal subunit biogenesis and possibly also in cell cycle regulation and energy metabolism. The chain is GTPase Era from Afipia carboxidovorans (strain ATCC 49405 / DSM 1227 / KCTC 32145 / OM5) (Oligotropha carboxidovorans).